A 178-amino-acid polypeptide reads, in one-letter code: MQLYDFYKKNVLIKLKNKFNYKSIMQVPKIEKITLNMGVGKASFDKKLLEHAVNDLTLISGQKPYITKAKKSIANFKIRQGHPIGCKVTLRGKLMWFFFQKLICIAIPRIRDFRGLPVKSFDGFGNYSLGIKEQIIFPEIDYDKIDKIRGLDITITTNAKSDKEGLALLSAFNFPFRK.

Belongs to the universal ribosomal protein uL5 family. Part of the 50S ribosomal subunit; part of the 5S rRNA/L5/L18/L25 subcomplex. Contacts the 5S rRNA and the P site tRNA. Forms a bridge to the 30S subunit in the 70S ribosome.

Its function is as follows. This is one of the proteins that bind and probably mediate the attachment of the 5S RNA into the large ribosomal subunit, where it forms part of the central protuberance. In the 70S ribosome it contacts protein S13 of the 30S subunit (bridge B1b), connecting the 2 subunits; this bridge is implicated in subunit movement. Contacts the P site tRNA; the 5S rRNA and some of its associated proteins might help stabilize positioning of ribosome-bound tRNAs. The sequence is that of Large ribosomal subunit protein uL5 from Wigglesworthia glossinidia brevipalpis.